A 23-amino-acid polypeptide reads, in one-letter code: Magainin-R1 (23 aa).

Expressed by the skin glands.

The protein resides in the secreted. Its function is as follows. Antimicrobial peptide. This chain is Magainin-R1, found in Xenopus ruwenzoriensis (Uganda clawed frog).